The sequence spans 191 residues: Peptidyl-tRNA hydrolase (191 aa).

Tyrosine 14 contacts tRNA. Residue histidine 19 is the Proton acceptor of the active site. Residues tyrosine 64, asparagine 66, and asparagine 112 each coordinate tRNA.

This sequence belongs to the PTH family. Monomer.

It localises to the cytoplasm. The catalysed reaction is an N-acyl-L-alpha-aminoacyl-tRNA + H2O = an N-acyl-L-amino acid + a tRNA + H(+). In terms of biological role, hydrolyzes ribosome-free peptidyl-tRNAs (with 1 or more amino acids incorporated), which drop off the ribosome during protein synthesis, or as a result of ribosome stalling. Its function is as follows. Catalyzes the release of premature peptidyl moieties from peptidyl-tRNA molecules trapped in stalled 50S ribosomal subunits, and thus maintains levels of free tRNAs and 50S ribosomes. The protein is Peptidyl-tRNA hydrolase of Clostridium botulinum (strain Eklund 17B / Type B).